The sequence spans 548 residues: MAQLSGQPVVILPEGTQRYVGRDAQRLNILAARIIAETVRTTLGPKGMDKMLVDSLGDIVVTNDGATILDKIDLQHPAAKMMVEVAKTQDKEAGDGTTTAVVIAGELLRKAEELLDQNIHPSIIIKGYALAAEKAQEILDEIAIRVDPDDEETLLKIAATSITGKNAESHKELLAKLAVEAVKQVAEKKDGKYVVDLDNIKFEKKAGEGVEESELVRGVVIDKEVVHPRMPKRVENAKIALINEALEVKKTETDAKINITSPDQLMSFLEQEEKMLKDMVDHIAQTGANVVFVQKGIDDLAQHYLAKYGIMAVRRVKKSDMEKLAKATGAKIVTNVKDLTPEDLGYAEVVEERKLAGENMIFVEGCKNPKAVTILIRGGTEHVIDEVERALEDAVKVVKDVMEDGAVLPAGGAPEIELAIRLDEYAKQVGGKEALAIENFADALKIIPKTLAENAGLDTVEMLVKVISEHKNRGLGIGIDVFEGKPADMLEKGIIEPLRVKKQAIKSASEAAIMILRIDDVIAAKATKPEGGQGGGMPGGMGGMDMGM.

The disordered stretch occupies residues 527-548; that stretch reads TKPEGGQGGGMPGGMGGMDMGM. The span at 531–548 shows a compositional bias: gly residues; that stretch reads GGQGGGMPGGMGGMDMGM.

The protein belongs to the TCP-1 chaperonin family. In terms of assembly, forms a Heterooligomeric complex of two stacked eight-membered rings.

Functionally, molecular chaperone; binds unfolded polypeptides in vitro, and has a weak ATPase activity. In Thermococcus sp. (strain JCM 11816 / KS-1), this protein is Thermosome subunit alpha (thsA).